We begin with the raw amino-acid sequence, 360 residues long: MDPEETSVYLDYYYATSPNPDIRETHSHVPYTSVFLPVFYIAVFLTGVLGNLVLMGALHFKPGSRRLIDIFIINLAASDFIFLVTLPLWVDKEASLGLWRTGSFLCKGSSYMISVNMHCSVFLLTCMSVDRYLAIVCPVVSRKFRRTDCAYVVCASIWFISCLLGLPTLLSRELTLIDDKPYCAEKKATPLKLIWSLVALIFTFFVPLLSIVTCYCRIARKLCAHYQQSGKHNKKLKKSIKIIFIVVAAFLVSWLPFNTSKLLAIVSGLQQERYFPSAILQLGMEVSGPLAFANSCVNPFIYYIFDSYIRRAIVHCLCPCLKNYDFGSSTETSDSHLTKALSTFIHAEDFTRRRKRSVSL.

At 1–33 (MDPEETSVYLDYYYATSPNPDIRETHSHVPYTS) the chain is on the extracellular side. A helical transmembrane segment spans residues 34–54 (VFLPVFYIAVFLTGVLGNLVL). Residues 55-69 (MGALHFKPGSRRLID) are Cytoplasmic-facing. Residues 70-90 (IFIINLAASDFIFLVTLPLWV) traverse the membrane as a helical segment. Over 91 to 120 (DKEASLGLWRTGSFLCKGSSYMISVNMHCS) the chain is Extracellular. Residues 121–141 (VFLLTCMSVDRYLAIVCPVVS) traverse the membrane as a helical segment. Residues 142–149 (RKFRRTDC) are Cytoplasmic-facing. The chain crosses the membrane as a helical span at residues 150–170 (AYVVCASIWFISCLLGLPTLL). Residues 171 to 192 (SRELTLIDDKPYCAEKKATPLK) lie on the Extracellular side of the membrane. A helical transmembrane segment spans residues 193 to 213 (LIWSLVALIFTFFVPLLSIVT). Residues 214 to 239 (CYCRIARKLCAHYQQSGKHNKKLKKS) are Cytoplasmic-facing. A helical membrane pass occupies residues 240–260 (IKIIFIVVAAFLVSWLPFNTS). Residues 261–284 (KLLAIVSGLQQERYFPSAILQLGM) lie on the Extracellular side of the membrane. Residues 285–305 (EVSGPLAFANSCVNPFIYYIF) traverse the membrane as a helical segment. Residues 306–360 (DSYIRRAIVHCLCPCLKNYDFGSSTETSDSHLTKALSTFIHAEDFTRRRKRSVSL) are Cytoplasmic-facing. At S359 the chain carries Phosphoserine.

The protein belongs to the G-protein coupled receptor 1 family. In terms of assembly, interacts with adapter YWHAE; this interaction promotes ER-to-Golgi transport of GPR15. Post-translationally, phosphorylation is necessary for YWHAE binding and efficient surface expression. O-glycosylated. Sialylated O-glycans in the N-terminal tail inhibits binding of GPR15LG. In terms of processing, sulfation is required for efficient binding of GPR15LG.

It is found in the cell membrane. In terms of biological role, g protein-coupled receptor that plays an important role in immune homeostasis. Acts via its natural ligand GPR15LG, a chemokine-like polypeptide strongly expressed in gastrointestinal tissues. GPR15-GPR15LG signaling axis regulates intestinal homeostasis and inflammation through the migration of immune cells. Controls thereby the specific homing of T-cells, particularly FOXP3+ regulatory T-cells (Tregs), to the large intestine lamina propria. Also required for skin localization of thymus-derived dendritic epidermal T-cells. Plays an important role in mediating cytoprotective function as well as angiogenesis of thrombomodulin. Mechanistically, preferentially signals through the Gi/o pathway to inhibit adenylate cyclase activity and activate a phosphatidylinositol-calcium second messenger system that regulates the release of Ca(2+) ions from intracellular stores. The sequence is that of G-protein coupled receptor 15 (GPR15) from Chlorocebus aethiops (Green monkey).